The sequence spans 248 residues: Probable transcriptional regulatory protein Dde_2325 (248 aa).

Positions 1–15 (MAGHSKWKNIQHRKG) are enriched in basic residues. Residues 1-22 (MAGHSKWKNIQHRKGRQDAKKS) form a disordered region.

It belongs to the TACO1 family.

The protein localises to the cytoplasm. The chain is Probable transcriptional regulatory protein Dde_2325 from Oleidesulfovibrio alaskensis (strain ATCC BAA-1058 / DSM 17464 / G20) (Desulfovibrio alaskensis).